The sequence spans 164 residues: Nitric oxide synthase, inducible (164 aa).

A (6R)-L-erythro-5,6,7,8-tetrahydrobiopterin-binding site is contributed by Phe-3. Heme b is bound at residue Tyr-18. A calmodulin-binding region spans residues 42–62 (FKGLIRAVLFSQTLIKSALAK). The Flavodoxin-like domain occupies 66 to 164 (CTVLYATETG…SRMYPHFCAF (99 aa)). The FMN site is built by Thr-72, Glu-73, Thr-74, Lys-76, Ser-77, Ser-118, Thr-119, Ser-155, and Cys-162.

This sequence belongs to the NOS family. In terms of assembly, homodimer. The cofactor is heme b. FAD is required as a cofactor. It depends on FMN as a cofactor. Requires (6R)-L-erythro-5,6,7,8-tetrahydrobiopterin as cofactor.

It localises to the cytoplasm. The protein resides in the cytosol. It carries out the reaction 2 L-arginine + 3 NADPH + 4 O2 + H(+) = 2 L-citrulline + 2 nitric oxide + 3 NADP(+) + 4 H2O. With respect to regulation, not stimulated by calcium/calmodulin. Functionally, produces nitric oxide (NO) which is a messenger molecule with diverse functions throughout the body. In macrophages, NO mediates tumoricidal and bactericidal actions. Also has nitrosylase activity and mediates cysteine S-nitrosylation of cytoplasmic target proteins such COX2. The polypeptide is Nitric oxide synthase, inducible (nos2) (Carassius auratus (Goldfish)).